The primary structure comprises 410 residues: Phytoene synthase 1, chloroplastic (410 aa).

A chloroplast-targeting transit peptide spans 1–62 (MAIILVRAAS…EAGRPSPAVY (62 aa)).

The protein belongs to the phytoene/squalene synthase family. Monomer. Expressed in embryos, endosperm and seedling leaves. Expressed in leaves and endosperm.

Its subcellular location is the plastid. It localises to the chloroplast stroma. The enzyme catalyses 2 (2E,6E,10E)-geranylgeranyl diphosphate = 15-cis-phytoene + 2 diphosphate. The protein operates within carotenoid biosynthesis; phytoene biosynthesis; all-trans-phytoene from geranylgeranyl diphosphate: step 1/1. Its function is as follows. Catalyzes the conversion of geranylgeranyl diphosphate to phytoene. Mediates the first committed step in carotenoid biosynthesis. This Zea mays (Maize) protein is Phytoene synthase 1, chloroplastic.